The sequence spans 349 residues: Green-sensitive opsin-4 (349 aa).

At 1–36 the chain is on the extracellular side; sequence MNGTEGNNFYIPLSNRTGLARSPYEYPQYYLAEPWQ. N-linked (GlcNAc...) asparagine glycans are attached at residues Asn2 and Asn15. The helical transmembrane segment at 37–61 threads the bilayer; that stretch reads FKLLAVYMFFLICLGFPINGLTLLV. Residues 62–73 lie on the Cytoplasmic side of the membrane; it reads TAQHKKLRQPLN. A helical transmembrane segment spans residues 74–99; sequence FILVNLAVAGTIMVCFGFTVTFYTAI. Residues 100–113 are Extracellular-facing; it reads NGYFVLGPTGCAIE. An intrachain disulfide couples Cys110 to Cys187. Residues 114–133 form a helical membrane-spanning segment; sequence GFMATLGGEVALWSLVVLAV. Over 134-152 the chain is Cytoplasmic; that stretch reads ERYIVVCKPMGSFKFSASH. Residues 153–176 traverse the membrane as a helical segment; sequence AFAGCAFTWVMAMACAAPPLVGWS. Residues 177-202 lie on the Extracellular side of the membrane; the sequence is RYIPEGMQCSCGPDYYTLNPEYNNES. N-linked (GlcNAc...) asparagine glycosylation is present at Asn200. Residues 203–230 traverse the membrane as a helical segment; that stretch reads YVLYMFICHFILPVTIIFFTYGRLVCTV. Residues 231 to 252 lie on the Cytoplasmic side of the membrane; sequence KAAAAQQQESESTQKAEREVTR. A helical membrane pass occupies residues 253-276; sequence MVILMVLGFLIAWTPYATVAAWIF. The Extracellular segment spans residues 277-284; it reads FNKGAAFS. A helical transmembrane segment spans residues 285 to 309; that stretch reads AQFMAVPAFFSKTSALYNPVIYVLL. N6-(retinylidene)lysine is present on Lys296. Residues 310-349 lie on the Cytoplasmic side of the membrane; that stretch reads NKQFRNCMLTTLFCGKNPLGDDESSTVSTSKTEVSSVSPA. A disordered region spans residues 329 to 349; that stretch reads GDDESSTVSTSKTEVSSVSPA. The segment covering 334–349 has biased composition (low complexity); the sequence is STVSTSKTEVSSVSPA.

It belongs to the G-protein coupled receptor 1 family. Opsin subfamily. Phosphorylated on some or all of the serine and threonine residues present in the C-terminal region. Retinal double cone accessory photoreceptor cell outer segments.

Its subcellular location is the membrane. In terms of biological role, visual pigments are the light-absorbing molecules that mediate vision. They consist of an apoprotein, opsin, covalently linked to cis-retinal. This is Green-sensitive opsin-4 (opn1mw4) from Danio rerio (Zebrafish).